A 149-amino-acid polypeptide reads, in one-letter code: Nucleoside diphosphate kinase (149 aa).

K9, F57, R85, T91, R102, and N112 together coordinate ATP. H115 serves as the catalytic Pros-phosphohistidine intermediate.

Belongs to the NDK family. Mg(2+) is required as a cofactor.

Its subcellular location is the cytoplasm. The enzyme catalyses a 2'-deoxyribonucleoside 5'-diphosphate + ATP = a 2'-deoxyribonucleoside 5'-triphosphate + ADP. It carries out the reaction a ribonucleoside 5'-diphosphate + ATP = a ribonucleoside 5'-triphosphate + ADP. Major role in the synthesis of nucleoside triphosphates other than ATP. The ATP gamma phosphate is transferred to the NDP beta phosphate via a ping-pong mechanism, using a phosphorylated active-site intermediate. The polypeptide is Nucleoside diphosphate kinase (Methanoculleus marisnigri (strain ATCC 35101 / DSM 1498 / JR1)).